The chain runs to 196 residues: Peptide deformylase (196 aa).

2 residues coordinate Fe cation: cysteine 105 and histidine 147. Glutamate 148 is an active-site residue. Fe cation is bound at residue histidine 151.

This sequence belongs to the polypeptide deformylase family. Fe(2+) is required as a cofactor.

The enzyme catalyses N-terminal N-formyl-L-methionyl-[peptide] + H2O = N-terminal L-methionyl-[peptide] + formate. In terms of biological role, removes the formyl group from the N-terminal Met of newly synthesized proteins. Requires at least a dipeptide for an efficient rate of reaction. N-terminal L-methionine is a prerequisite for activity but the enzyme has broad specificity at other positions. This Flavobacterium johnsoniae (strain ATCC 17061 / DSM 2064 / JCM 8514 / BCRC 14874 / CCUG 350202 / NBRC 14942 / NCIMB 11054 / UW101) (Cytophaga johnsonae) protein is Peptide deformylase.